Consider the following 1463-residue polypeptide: Nitric oxide synthase 1 (1463 aa).

Residues 1–200 form an interaction with NOSIP region; sequence MESHMFSVQQ…LQGSGENNKL (200 aa). Positions 17 to 99 constitute a PDZ domain; the sequence is SVRLFKRKVG…ETHVVLILRG (83 aa). Disordered regions lie at residues 110 to 194, 215 to 250, and 268 to 298; these read TFTG…LQGS, GKAI…LPLG, and VVLN…SKCP. The segment at 158–240 is DYNLL1/PIN/nNOS-inhibiting protein-binding; the sequence is PDPGQEASSL…VEVQVDRDPD (83 aa). The span at 226 to 243 shows a compositional bias: basic and acidic residues; it reads TETKDVEVQVDRDPDSKS. A compositionally biased stretch (polar residues) spans 280–294; the sequence is PSASGKQSPTKNGSP. (6R)-L-erythro-5,6,7,8-tetrahydrobiopterin is bound at residue Ser334. Cys415 serves as a coordination point for heme b. The L-arginine site is built by Gln478, Trp587, Tyr588, and Glu592. Val677, Trp678, and Phe691 together coordinate (6R)-L-erythro-5,6,7,8-tetrahydrobiopterin. Tyr706 serves as a coordination point for heme b. Residues 725–745 are calmodulin-binding; that stretch reads KRRAIGFKKLAEAVKFSAKLM. The 215-residue stretch at 755 to 969 folds into the Flavodoxin-like domain; sequence ATILYATETG…AFRTWAKKVF (215 aa). 8 residues coordinate FMN: Thr761, Glu762, Thr763, Lys765, Ser766, Ser807, Thr808, and Gly812. A phosphoserine mark is found at Ser881, Ser891, and Ser892. Residues Ser920, His925, Cys927, Glu953, and Gln957 each contribute to the FMN site. The 248-residue stretch at 1024–1271 folds into the FAD-binding FR-type domain; sequence KRVSAARLLS…VRGAPSFHLP (248 aa). Arg1044 provides a ligand contact to NADP(+). The FAD site is built by His1066, Arg1207, Tyr1208, Tyr1209, Ser1210, Thr1225, and Ala1227. Ser1230 is a binding site for NADP(+). Residues Tyr1231, Val1244, Cys1245, and Ser1246 each contribute to the FAD site. Positions 1285, 1318, 1347, 1348, 1354, 1356, 1358, 1391, 1432, and 1434 each coordinate NADP(+).

The protein belongs to the NOS family. In terms of assembly, homodimer. Interacts with DLG4; the interaction possibly being prevented by the association between NOS1 and CAPON. Forms a ternary complex with CAPON and RASD1. Forms a ternary complex with CAPON and SYN1. Interacts with ZDHHC23. Interacts with NOSIP; which may impair its synaptic location. Interacts with HTR4. Interacts with SLC6A4. Interacts with VAC14. Interacts (via N-terminal domain) with DLG4 (via N-terminal tandem pair of PDZ domains). Interacts with SLC6A4. Forms a complex with ASL, ASS1 and SLC7A1; the complex regulates cell-autonomous L-arginine synthesis and citrulline recycling while channeling extracellular L-arginine to nitric oxide synthesis pathway. Interacts with DMD; localizes NOS1 to sarcolemma in muscle cells. Interacts with DYNLL1; inhibits the nitric oxide synthase activity. It depends on heme b as a cofactor. Requires FAD as cofactor. FMN serves as cofactor. The cofactor is (6R)-L-erythro-5,6,7,8-tetrahydrobiopterin. Post-translationally, ubiquitinated; mediated by STUB1/CHIP in the presence of Hsp70 and Hsp40 (in vitro).

Its subcellular location is the cell membrane. It localises to the sarcolemma. The protein resides in the cell projection. It is found in the dendritic spine. It catalyses the reaction 2 L-arginine + 3 NADPH + 4 O2 + H(+) = 2 L-citrulline + 2 nitric oxide + 3 NADP(+) + 4 H2O. Its activity is regulated as follows. Stimulated by calcium/calmodulin. Inhibited by DYNLL1 that prevents the dimerization of the protein. Inhibited by NOSIP. Functionally, produces nitric oxide (NO) which is a messenger molecule with diverse functions throughout the body. In the brain and peripheral nervous system, NO displays many properties of a neurotransmitter. Probably has nitrosylase activity and mediates cysteine S-nitrosylation of cytoplasmic target proteins such SRR. This chain is Nitric oxide synthase 1 (NOS1), found in Ovis aries (Sheep).